Here is a 92-residue protein sequence, read N- to C-terminus: MTRSLKKNPFVANHLLRKIEKLNTKAEKEIIITWSRASTIIPTMIGHTIAIHNGREHLPIYITDRMVGHKLGEFSPTINFRGHAKNDNRSRR.

This sequence belongs to the universal ribosomal protein uS19 family.

Its subcellular location is the plastid. It is found in the chloroplast. In terms of biological role, protein S19 forms a complex with S13 that binds strongly to the 16S ribosomal RNA. This is Small ribosomal subunit protein uS19c from Eucalyptus globulus subsp. globulus (Tasmanian blue gum).